A 563-amino-acid chain; its full sequence is Coiled-coil domain-containing protein 38 (563 aa).

Residues 1–11 (MSSNLLPTLNS) show a composition bias toward polar residues. The segment at 1–21 (MSSNLLPTLNSGGKVKDGSTK) is disordered. The stretch at 129–212 (KRNTIKKFEK…VKSEIAKTEF (84 aa)) forms a coiled coil. Positions 272 to 311 (ESGRTAVLSEDASQGRDSQGKPSRSLTRTPEKKKSNLAES) are disordered. The segment covering 282 to 299 (DASQGRDSQGKPSRSLTR) has biased composition (polar residues). 2 coiled-coil regions span residues 384–415 (NIEF…KSKL) and 497–522 (RDEK…AVAQ). The segment at 522–563 (QPKKKLGRRLVFHSKPPSGNKQQLPLVNETKTKSQEEEYFFT) is disordered. Residues 523-533 (PKKKLGRRLVF) are compositionally biased toward basic residues.

As to quaternary structure, interacts with CCDC42, CFAP53, IFT88 and ODF2. Interacts with CCDC146. Interacts with TEKT3. Interacts with ubiquitinated histone H2A.

The protein localises to the cytoplasm. It localises to the cytoskeleton. It is found in the microtubule organizing center. Its subcellular location is the centrosome. The protein resides in the perinuclear region. The protein localises to the cell projection. It localises to the cilium. It is found in the flagellum. Its function is as follows. Essential for male fertility. Required for sperm flagellum biogenesis. Also required for acrosome biogenesis. Required for the attachment of developing acrosomes to the nucleus during spermiogenesis and may be involved in the transport of fibrous sheath components. The chain is Coiled-coil domain-containing protein 38 (CCDC38) from Homo sapiens (Human).